The chain runs to 221 residues: Vesicle transport v-SNARE 11 (221 aa).

At S2 the chain carries N-acetylserine. The Cytoplasmic segment spans residues 2–198 (SDVFDGYERQ…MTRRMNKNKW (197 aa)). Positions 32–93 (EQKKQKLSEI…FKTEVKRITS (62 aa)) form a coiled coil. Residues 199–219 (TIGAIIIALIAAIFIILYFKL) traverse the membrane as a helical; Anchor for type IV membrane protein segment. Over 220–221 (TK) the chain is Vesicular.

Belongs to the VTI1 family. In terms of assembly, forms SNARE complexes with the t-SNAREs SYP51 and either SYP21 or SYP22 in the PVC, and with a much lower affinity with SYP61 in the TGN. Does not interact with SYP41, SYP42 or VPS45. Binds to EPSIN1. Interacts with SCYL2B. As to expression, expressed in roots, stems, flowers and leaves.

It is found in the golgi apparatus. The protein resides in the trans-Golgi network membrane. Its subcellular location is the prevacuolar compartment membrane. The protein localises to the vacuole membrane. Its function is as follows. Functions as a v-SNARE responsible for targeting AtELP-containing vesicles from the trans-Golgi network (TGN) to the prevacuolar compartment (PVC) and mediates liposome fusion. May be also involved in retrograde traffic to the cis-Golgi. Promotes the formation of vacuolar membrane 'bulbs'. Necessary to deliver proteins to the lytic vacuole, but seems not involved in storage proteins transport. Required for amyloplast sedimentation in the endodermis during shoot gravitropism, which are thus acting as statoliths. Expression in the endodermis is essential for the shoot gravitropic response, whereas expression in other tissues may be responsible for the correct stem and leaf shape. In Arabidopsis thaliana (Mouse-ear cress), this protein is Vesicle transport v-SNARE 11.